The sequence spans 140 residues: Heavy metal-associated isoprenylated plant protein 31 (140 aa).

The HMA domain occupies 3 to 67 (MTVEIRVPNL…AVRRAGKAAE (65 aa)). A metal cation-binding residues include Cys-14 and Cys-17. Cys-137 carries the cysteine methyl ester modification. A lipid anchor (S-farnesyl cysteine) is attached at Cys-137. A propeptide spans 138-140 (TIM) (removed in mature form).

Belongs to the HIPP family.

Heavy-metal-binding protein. This Arabidopsis thaliana (Mouse-ear cress) protein is Heavy metal-associated isoprenylated plant protein 31.